Reading from the N-terminus, the 310-residue chain is tRNA methyltransferase 10 homolog B (310 aa).

Residues 55–94 (RKQRNWERRLEVKKSKRKEEKLRKKLNRQDKDVSDAQLSK) are a coiled coil. The SAM-dependent MTase TRM10-type domain occupies 101-298 (TKERLEGARA…AGIPPGKGFV (198 aa)).

Belongs to the class IV-like SAM-binding methyltransferase superfamily. TRM10 family.

The catalysed reaction is guanosine(9) in tRNA + S-adenosyl-L-methionine = N(1)-methylguanosine(9) in tRNA + S-adenosyl-L-homocysteine + H(+). S-adenosyl-L-methionine-dependent guanine N(1)-methyltransferase that catalyzes the formation of N(1)-methylguanine at position 9 (m1G9) in tRNAs. Probably not able to catalyze formation of N(1)-methyladenine at position 9 (m1A9) in tRNAs. In Danio rerio (Zebrafish), this protein is tRNA methyltransferase 10 homolog B (trmt10b).